Reading from the N-terminus, the 471-residue chain is Citrate synthase, mitochondrial (471 aa).

Catalysis depends on residues histidine 309, histidine 355, and aspartate 409.

This sequence belongs to the citrate synthase family. As to quaternary structure, homodimer. In terms of tissue distribution, ubiquitous.

Its subcellular location is the mitochondrion matrix. The enzyme catalyses oxaloacetate + acetyl-CoA + H2O = citrate + CoA + H(+). It functions in the pathway carbohydrate metabolism; tricarboxylic acid cycle; isocitrate from oxaloacetate: step 1/2. In Solanum tuberosum (Potato), this protein is Citrate synthase, mitochondrial.